We begin with the raw amino-acid sequence, 505 residues long: Maturase K (505 aa).

The protein belongs to the intron maturase 2 family. MatK subfamily.

The protein localises to the plastid. It localises to the chloroplast. Functionally, usually encoded in the trnK tRNA gene intron. Probably assists in splicing its own and other chloroplast group II introns. This is Maturase K from Calycanthus floridus (Eastern sweetshrub).